A 585-amino-acid polypeptide reads, in one-letter code: MAGUK p55 subfamily member 3 (585 aa).

L27 domains lie at 6–60 (EDSG…ERQS) and 61–118 (PTPV…FDPV). The PDZ domain maps to 137–218 (IVRLVKNKEP…SITLKIIPAT (82 aa)). Residues 226 to 296 (ESKVFMRALF…PSKQFQERRL (71 aa)) enclose the SH3 domain. S307 is modified (phosphoserine). One can recognise a Guanylate kinase-like domain in the interval 385 to 570 (SRLVVLIGSL…VCSQLRAVIE (186 aa)). Positions 510–530 (KRKTPPVSPDSEDPATPLDEQ) are disordered.

The protein belongs to the MAGUK family. As to quaternary structure, interacts with HTR2C; this interaction stabilizes the receptor at the plasma membrane and prevents the desensitization of the HTR2C receptor-mediated calcium response. Interacts with HTR2A. Interacts with HTR4. Interacts (via PDZ domain) with CADM1 (via C-terminus)Interacts (via PDZ domain) with CADM1; this interaction connects CADM1 with DLG1. Interacts (via Guanylate kinase-like domain) with PALS1. Interacts with DLG1 (via N-terminus); this interaction connects CADM1 with DLG1 and links CADM1 with the regulatory subunit of phosphoinositide-3-kinase (PI3K) by forming a multiprotein complex and participates in cell spreading.

The protein resides in the apical cell membrane. The protein localises to the cell membrane. It localises to the cell junction. It is found in the adherens junction. Its function is as follows. Participates in cell spreading through the phosphoinositide-3-kinase (PI3K) pathway by connecting CADM1 to DLG1 and the regulatory subunit of phosphoinositide-3-kinase (PI3K). Stabilizes HTR2C at the plasma membrane and prevents its desensitization. May participates in the maintenance of adherens junctions. The sequence is that of MAGUK p55 subfamily member 3 from Rattus norvegicus (Rat).